We begin with the raw amino-acid sequence, 118 residues long: Beta-2-microglobulin (118 aa).

The N-terminal stretch at 1 to 21 is a signal peptide; the sequence is MESRWGIVVIGLLCCVSWVEA. Residues 26–113 enclose the Ig-like C1-type domain; the sequence is PKIQVYTRSP…THNSVTKSVK (88 aa). A disulfide bridge links cysteine 46 with cysteine 101.

It belongs to the beta-2-microglobulin family. As to quaternary structure, heterodimer of an alpha chain and a beta chain. Beta-2-microglobulin is the beta-chain of major histocompatibility complex class I molecules.

The protein resides in the secreted. Its function is as follows. Component of the class I major histocompatibility complex (MHC). Involved in the presentation of peptide antigens to the immune system. The protein is Beta-2-microglobulin (B2M) of Tachyglossus aculeatus aculeatus (Southeast Australian short-beaked echidna).